We begin with the raw amino-acid sequence, 715 residues long: Polyribonucleotide nucleotidyltransferase (715 aa).

Positions 488 and 494 each coordinate Mg(2+). The KH domain occupies 555 to 614 (PRIEVMHIPTDKIRDVIGSGGKVIREIVEKTGAKINIEDDGTVKIASSNAKEIEAAKKWI). The region spanning 624-692 (GEIYEGTVVK…ERGKVRLSMK (69 aa)) is the S1 motif domain.

The protein belongs to the polyribonucleotide nucleotidyltransferase family. Requires Mg(2+) as cofactor.

Its subcellular location is the cytoplasm. The enzyme catalyses RNA(n+1) + phosphate = RNA(n) + a ribonucleoside 5'-diphosphate. Its function is as follows. Involved in mRNA degradation. Catalyzes the phosphorolysis of single-stranded polyribonucleotides processively in the 3'- to 5'-direction. This chain is Polyribonucleotide nucleotidyltransferase, found in Mesorhizobium japonicum (strain LMG 29417 / CECT 9101 / MAFF 303099) (Mesorhizobium loti (strain MAFF 303099)).